Here is a 279-residue protein sequence, read N- to C-terminus: Shikimate dehydrogenase (NADP(+)) (279 aa).

Shikimate contacts are provided by residues 19–21 (SRS) and Thr66. The active-site Proton acceptor is Lys70. The shikimate site is built by Asn91 and Asp106. Residues 129–133 (GAGGA), 152–157 (NRTLER), and Ile218 contribute to the NADP(+) site. Tyr220 serves as a coordination point for shikimate. Gly241 provides a ligand contact to NADP(+).

Belongs to the shikimate dehydrogenase family. In terms of assembly, homodimer.

The catalysed reaction is shikimate + NADP(+) = 3-dehydroshikimate + NADPH + H(+). The protein operates within metabolic intermediate biosynthesis; chorismate biosynthesis; chorismate from D-erythrose 4-phosphate and phosphoenolpyruvate: step 4/7. In terms of biological role, involved in the biosynthesis of the chorismate, which leads to the biosynthesis of aromatic amino acids. Catalyzes the reversible NADPH linked reduction of 3-dehydroshikimate (DHSA) to yield shikimate (SA). In Gluconobacter oxydans (strain 621H) (Gluconobacter suboxydans), this protein is Shikimate dehydrogenase (NADP(+)).